The primary structure comprises 123 residues: Small ribosomal subunit protein uS12 (123 aa).

The tract at residues 1–28 is disordered; that stretch reads MPTIQQLIRTERSKVQKKTKSPALKQCP. The residue at position 89 (Asp-89) is a 3-methylthioaspartic acid. The disordered stretch occupies residues 104–123; it reads ATGVKDRKQGRSKYGTKRPK. Residues 113 to 123 are compositionally biased toward basic residues; that stretch reads GRSKYGTKRPK.

Belongs to the universal ribosomal protein uS12 family. As to quaternary structure, part of the 30S ribosomal subunit. Contacts proteins S8 and S17. May interact with IF1 in the 30S initiation complex.

Functionally, with S4 and S5 plays an important role in translational accuracy. In terms of biological role, interacts with and stabilizes bases of the 16S rRNA that are involved in tRNA selection in the A site and with the mRNA backbone. Located at the interface of the 30S and 50S subunits, it traverses the body of the 30S subunit contacting proteins on the other side and probably holding the rRNA structure together. The combined cluster of proteins S8, S12 and S17 appears to hold together the shoulder and platform of the 30S subunit. The protein is Small ribosomal subunit protein uS12 of Gloeothece citriformis (strain PCC 7424) (Cyanothece sp. (strain PCC 7424)).